A 309-amino-acid polypeptide reads, in one-letter code: Porphobilinogen deaminase (309 aa).

Cys243 carries the S-(dipyrrolylmethanemethyl)cysteine modification.

The protein belongs to the HMBS family. In terms of assembly, monomer. It depends on dipyrromethane as a cofactor.

It carries out the reaction 4 porphobilinogen + H2O = hydroxymethylbilane + 4 NH4(+). Its pathway is porphyrin-containing compound metabolism; protoporphyrin-IX biosynthesis; coproporphyrinogen-III from 5-aminolevulinate: step 2/4. Its function is as follows. Tetrapolymerization of the monopyrrole PBG into the hydroxymethylbilane pre-uroporphyrinogen in several discrete steps. The chain is Porphobilinogen deaminase from Deinococcus geothermalis (strain DSM 11300 / CIP 105573 / AG-3a).